Here is a 706-residue protein sequence, read N- to C-terminus: Translation initiation factor IF-2 (706 aa).

Over residues 55–81 (AKETANEKPAEQKKQSSNKINDRKKND) the composition is skewed to basic and acidic residues. A disordered region spans residues 55–127 (AKETANEKPA…KPKKELPEKI (73 aa)). Residues 82-98 (VQNNQFNKNKKNNNQNK) show a composition bias toward low complexity. A tr-type G domain is found at 207–376 (VRPPVVTIMG…LLVSEVGELK (170 aa)). The G1 stretch occupies residues 216 to 223 (GHVDHGKT). 216–223 (GHVDHGKT) is a binding site for GTP. The tract at residues 241-245 (GITQH) is G2. The interval 262–265 (DTPG) is G3. GTP contacts are provided by residues 262 to 266 (DTPGH) and 316 to 319 (NKID). The tract at residues 316–319 (NKID) is G4. The tract at residues 352–354 (SAK) is G5.

It belongs to the TRAFAC class translation factor GTPase superfamily. Classic translation factor GTPase family. IF-2 subfamily.

It is found in the cytoplasm. Functionally, one of the essential components for the initiation of protein synthesis. Protects formylmethionyl-tRNA from spontaneous hydrolysis and promotes its binding to the 30S ribosomal subunits. Also involved in the hydrolysis of GTP during the formation of the 70S ribosomal complex. This Bacillus pumilus (strain SAFR-032) protein is Translation initiation factor IF-2.